A 410-amino-acid polypeptide reads, in one-letter code: 3-phenylpropionate/cinnamic acid dioxygenase ferredoxin--NAD(+) reductase component (410 aa).

5–36 (TIIIVGGGQAAAMAAASLRQQGFTGELHLFSD) is a binding site for FAD. 146–184 (SVVIVGAGTIGLELAASATQRSAAQRSAAQRRCKVTVIE) is a binding site for NAD(+).

Belongs to the bacterial ring-hydroxylating dioxygenase ferredoxin reductase family. This dioxygenase system consists of four proteins: the two subunits of the hydroxylase component (HcaE and HcaF), a ferredoxin (HcaC) and a ferredoxin reductase (HcaD). The cofactor is FAD.

The enzyme catalyses 2 reduced [2Fe-2S]-[ferredoxin] + NAD(+) + H(+) = 2 oxidized [2Fe-2S]-[ferredoxin] + NADH. It participates in aromatic compound metabolism; 3-phenylpropanoate degradation. Functionally, part of the multicomponent 3-phenylpropionate dioxygenase, that converts 3-phenylpropionic acid (PP) and cinnamic acid (CI) into 3-phenylpropionate-dihydrodiol (PP-dihydrodiol) and cinnamic acid-dihydrodiol (CI-dihydrodiol), respectively. The chain is 3-phenylpropionate/cinnamic acid dioxygenase ferredoxin--NAD(+) reductase component from Shigella flexneri serotype 5b (strain 8401).